Here is a 122-residue protein sequence, read N- to C-terminus: Large ribosomal subunit protein uL18 (122 aa).

This sequence belongs to the universal ribosomal protein uL18 family. In terms of assembly, part of the 50S ribosomal subunit; part of the 5S rRNA/L5/L18/L25 subcomplex. Contacts the 5S and 23S rRNAs.

This is one of the proteins that bind and probably mediate the attachment of the 5S RNA into the large ribosomal subunit, where it forms part of the central protuberance. The polypeptide is Large ribosomal subunit protein uL18 (Prochlorococcus marinus (strain MIT 9215)).